The chain runs to 242 residues: Neuromodulin (242 aa).

Residues 1-242 are disordered; sequence MLCCMRRTKQ…EEREADQEHA (242 aa). 2 S-palmitoyl cysteine lipidation sites follow: cysteine 3 and cysteine 4. Residues 9–32 are compositionally biased toward basic and acidic residues; that stretch reads KQVEKNDEDQKIEQDGIKPEDKAH. The 30-residue stretch at 31–60 folds into the IQ domain; sequence AHKAATKIQASFRGHITRKKLKGEKKGDAQ. Serine 41 is subject to Phosphoserine; by PHK and PKC. Basic and acidic residues-rich tracts occupy residues 66-84 and 98-117; these read GNEKDEAPVADGVEKKEGE and KAEETGKAGETPSEEKKGEG. Positions 142–157 are enriched in polar residues; the sequence is ETESATKASTDNSPSS. Phosphoserine occurs at positions 154, 156, and 157. The span at 158–170 shows a compositional bias: basic and acidic residues; that stretch reads KAEDAPAKEEPKQ. The segment covering 171–203 has biased composition (low complexity); the sequence is ADVPAAVTAAAAATTPAAEDAAAKATAQPPTDA. Residue threonine 185 is modified to Phosphothreonine. Residues serine 206 and serine 207 each carry the phosphoserine; by CK2 modification. Basic and acidic residues predominate over residues 209–242; it reads AEEKIEAVDETKPKESARQDEGKGEEREADQEHA.

The protein belongs to the neuromodulin family. In terms of assembly, identified in a complex containing FGFR4, NCAM1, CDH2, PLCG1, FRS2, SRC, SHC1, GAP43 and CTTN. Interacts (via IQ domain) with calmodulin. Binds calmodulin with a greater affinity in the absence of Ca(2+) than in its presence. Phosphorylated. Phosphorylation of this protein by a protein kinase C is specifically correlated with certain forms of synaptic plasticity. In terms of processing, palmitoylated by ZDHHC3. Palmitoylation is regulated by ARF6 and is essential for plasma membrane association and axonal and dendritic filopodia induction. Deacylated by LYPLA2.

Its subcellular location is the cell membrane. The protein resides in the cell projection. It is found in the growth cone membrane. It localises to the synapse. The protein localises to the filopodium membrane. Its subcellular location is the perikaryon. The protein resides in the dendrite. It is found in the axon. It localises to the cytoplasm. Its function is as follows. This protein is associated with nerve growth. It is a major component of the motile 'growth cones' that form the tips of elongating axons. Plays a role in axonal and dendritic filopodia induction. This chain is Neuromodulin (GAP43), found in Felis catus (Cat).